The primary structure comprises 267 residues: Pre-protein VI (267 aa).

Positions 1–33 (MEDINFASLAPRHGSRPFMGTWNEIGTSQLNGG) are excised as a propeptide. The amphipathic alpha-helix essential for membrane lytic activity stretch occupies residues 34-54 (AFSWSSLWSGIKNFGSSIKSF). Residues 36–53 (SWSSLWSGIKNFGSSIKS) form an involved in endosomal membrane lysis region. Residues 48-74 (GSSIKSFGNKAWNSNTGQMLRDKLKDQ) form an interaction with hexon protein region. Residues 67 to 76 (LRDKLKDQNF) carry the Nuclear export signal motif. Disordered stretches follow at residues 107–184 (LENS…PMTK) and 199–230 (KPVT…PTAP). 2 stretches are compositionally biased toward basic and acidic residues: residues 123–135 (PKVE…EKLP) and 146–155 (KGEKRPRPDL). A Nuclear localization signal motif is present at residues 149–153 (KRPRP). The PPXY motif motif lies at 166-169 (PPSY). Residues 205 to 217 (LPPPVPTVPPMPA) are compositionally biased toward pro residues. Positions 218-230 (PTLGTAVSRPTAP) are enriched in low complexity. Positions 248 to 259 (STLNSIVGLGVK) match the Nuclear export signal motif. Positions 250 to 256 (LNSIVGL) are interaction with hexon protein. The interval 257-267 (GVKSLKRRRCY) is binds to importin alpha/beta, involved in hexon nuclear import. A Nuclear localization signal motif is present at residues 262 to 265 (KRRR).

It belongs to the adenoviridae protein VI family. As to quaternary structure, interacts with hexon protein; this interaction allows nuclear import of hexon trimers and possibly pre-capsid assembly. Interacts (via C-terminal NLS) with importin alpha/beta. In terms of assembly, interacts (via PPxY motif) with host NEDD4 ubiquitine ligase; this interaction might play a role in virus intracellular transport during entry. Part of a complex composed of the core-capsid bridging protein, the endosome lysis protein VI and the hexon-linking protein VIII; these interactions bridge the virus core to the capsid. Interacts with peripentonal hexons; this interaction stabilizes the capsid by gluing two peripentonal hexons together and joining them with an adjacent group-of-nine hexon. Heterodimer with the viral protease; disulfide-linked. Interacts with the viral protease. In terms of processing, ubiquitinated by Nedd4 following partial capsid disassembly; which might play a role in intracellular virus movement during entry. Contains the major nuclear import and export signals. Proteolytically removed during virion maturation. The processing of the C-terminus turns the precursor into a mature viral structural protein and abrogates its ability to promote hexon import and act as a potential chaperone protein.

Its subcellular location is the host nucleus. It localises to the host cytoplasm. The protein localises to the virion. Its function is as follows. During virus assembly, promotes hexon trimers nuclear import through nuclear pore complexes via an importin alpha/beta-dependent mechanism. By analogy to herpesviruses capsid assembly, might act as a chaperone to promote the formation of the icosahedral capsid. In terms of biological role, structural component of the virion that provides increased stability to the particle shell through its interaction with the core-capsid bridging protein and the hexon-linking protein VIII. Fibers shedding during virus entry into host cell allows the endosome lysis protein to be exposed as a membrane-lytic peptide. Exhibits pH-independent membrane fragmentation activity and probably mediates viral rapid escape from host endosome via organellar membrane lysis. It is not clear if it then remains partially associated with the capsid and involved in the intracellular microtubule-dependent transport of capsid to the nucleus, or if it is lost during endosomal penetration. Functionally, cofactor that activates the viral protease. Binds to viral protease in a 1:1 ratio. The polypeptide is Pre-protein VI (Homo sapiens (Human)).